Reading from the N-terminus, the 419-residue chain is Probable serine/threonine-protein kinase DDB_G0290859 (419 aa).

The Protein kinase domain occupies 40 to 387 (YDIISTIGSG…ASTIKKHPFF (348 aa)). ATP is bound by residues 46–54 (IGSGSYGEV) and Lys-69. Asp-173 functions as the Proton acceptor in the catalytic mechanism. One can recognise an AGC-kinase C-terminal domain in the interval 388–419 (EGINWEEMANFNVEPPFKPTLSSDDDISYFTN).

The protein belongs to the protein kinase superfamily. AGC Ser/Thr protein kinase family.

The catalysed reaction is L-seryl-[protein] + ATP = O-phospho-L-seryl-[protein] + ADP + H(+). It catalyses the reaction L-threonyl-[protein] + ATP = O-phospho-L-threonyl-[protein] + ADP + H(+). The polypeptide is Probable serine/threonine-protein kinase DDB_G0290859 (Dictyostelium discoideum (Social amoeba)).